A 765-amino-acid polypeptide reads, in one-letter code: Polyribonucleotide nucleotidyltransferase (765 aa).

Residues D556 and D562 each contribute to the Mg(2+) site. Residues 622–681 form the KH domain; it reads PRITKISIPQNKIGEVIGPKGKTINQITEETGANISIEDDGTVFVSAVGGEAAEAAIEKI. Positions 693–762 constitute an S1 motif domain; the sequence is GDRFLGTVVK…NRGKISLVPV (70 aa).

It belongs to the polyribonucleotide nucleotidyltransferase family. The cofactor is Mg(2+).

It localises to the cytoplasm. The enzyme catalyses RNA(n+1) + phosphate = RNA(n) + a ribonucleoside 5'-diphosphate. Involved in mRNA degradation. Catalyzes the phosphorolysis of single-stranded polyribonucleotides processively in the 3'- to 5'-direction. The protein is Polyribonucleotide nucleotidyltransferase of Corynebacterium urealyticum (strain ATCC 43042 / DSM 7109).